The primary structure comprises 248 residues: NH(3)-dependent NAD(+) synthetase (248 aa).

ATP is bound at residue 31 to 38 (GVSGGVDS). Aspartate 37 is a binding site for Mg(2+). Arginine 114 provides a ligand contact to deamido-NAD(+). Threonine 134 serves as a coordination point for ATP. Glutamate 139 provides a ligand contact to Mg(2+). 2 residues coordinate deamido-NAD(+): lysine 147 and aspartate 154. Residues lysine 163 and serine 185 each coordinate ATP. 236 to 237 (HK) contacts deamido-NAD(+).

Belongs to the NAD synthetase family. In terms of assembly, homodimer.

It catalyses the reaction deamido-NAD(+) + NH4(+) + ATP = AMP + diphosphate + NAD(+) + H(+). The protein operates within cofactor biosynthesis; NAD(+) biosynthesis; NAD(+) from deamido-NAD(+) (ammonia route): step 1/1. Its function is as follows. Catalyzes the ATP-dependent amidation of deamido-NAD to form NAD. Uses ammonia as a nitrogen source. In Methanoregula boonei (strain DSM 21154 / JCM 14090 / 6A8), this protein is NH(3)-dependent NAD(+) synthetase.